Consider the following 906-residue polypeptide: Glutamate receptor 1 (906 aa).

The first 18 residues, 1-18 (MQHIFAFFCTGFLGAVVG), serve as a signal peptide directing secretion. At 19–536 (ANFPNNIQIG…GVFSFLDPLA (518 aa)) the chain is on the extracellular side. N-linked (GlcNAc...) asparagine glycans are attached at residues Asn-63, Asn-249, Asn-257, Asn-363, Asn-401, and Asn-406. Cys-75 and Cys-323 are disulfide-bonded. L-glutamate is bound by residues Pro-492, Thr-494, and Arg-499. Residues 537-557 (YEIWMCIVFAYIGVSVVLFLV) traverse the membrane as a helical segment. Over 558–584 (SRFSPYEWHSEEFEEGRDQTTSDQSNE) the chain is Cytoplasmic. The helical; Pore-forming intramembrane region spans 585 to 600 (FGIFNSLWFSLGAFMQ). An intramembrane segment occupies 601–603 (QGC). Residue Cys-603 is the site of S-palmitoyl cysteine attachment. Residues 604-609 (DISPRS) are Cytoplasmic-facing. Residues 610–630 (LSGRIVGGVWWFFTLIIISSY) form a helical membrane-spanning segment. Residues 631 to 805 (TANLAAFLTV…DKTSALSLSN (175 aa)) lie on the Extracellular side of the membrane. Residue Ser-645 is modified to Phosphoserine. Residues Ser-668 and Thr-669 each contribute to the L-glutamate site. Ser-710 carries the post-translational modification Phosphoserine. Glu-719 contacts L-glutamate. A disulfide bridge links Cys-732 with Cys-787. A helical membrane pass occupies residues 806–826 (VAGVFYILIGGLGLAMLVALI). The Cytoplasmic portion of the chain corresponds to 827–906 (EFCYKSRSES…SGMPLGATGL (80 aa)). Residue Cys-829 is the site of S-palmitoyl cysteine attachment. Residues Ser-849 and Ser-863 each carry the phosphoserine modification. Residues 861-880 (RNSGAGASSGGSGENGRVVS) are disordered. The PDZ-binding motif lies at 903-906 (ATGL).

The protein belongs to the glutamate-gated ion channel (TC 1.A.10.1) family. GRIA1 subfamily. Homotetramer or heterotetramer of pore-forming glutamate receptor subunits; heteromeric assembly can be the result of both receptor subtype and flip or flop form and according the composition, one partner can be dominant with respect to the fast desensitizing current component, whereas the other can determine the steady-state component. Tetramers may be formed by the dimerization of dimers. Found in a complex with GRIA2, GRIA3, GRIA4, CNIH2, CNIH3, CACNG2, CACNG3, CACNG4, CACNG5, CACNG7 and CACNG8. Interacts with HIP1 and RASGRF2. Interacts with SYNDIG1 and GRIA2. Interacts with DLG1 (via C-terminus). Interacts with LRFN1. Interacts with PRKG2. Interacts with CNIH2 and CACNG2. Interacts with CACNG5; this interaction modulates the gating. Interacts (via C-terminus) with PDLIM4 (via LIM domain); this interaction as well as the interaction of PDLIM4 with alpha-actinin is required for their colocalization in early endosomes. Interacts with SNX27 (via PDZ domain); the interaction is required for recycling to the plasma membrane when endocytosed and prevent degradation in lysosomes. Interacts (via PDZ-binding motif) with SHANK3 (via PDZ domain). Interacts with CACNG3; associates GRIA1 with the adapter protein complex 4 (AP-4) to target GRIA1 to the somatodendritic compartment of neurons. Interacts with CACNG2; this interaction mediates traffick to the plasma membrane and modulation of desensitization. Interacts with CNIH2 and CNIH3; this interaction promotes expression at the plasma membrane and extensively modulates their gating properties by slowing deactivation and desensitization kinetics. Found in a complex with GRIA2, GRIA3, GRIA4, DLG4, CACNG8 and CNIH2. Palmitoylated. Depalmitoylated by CPT1C and upon L-glutamate stimulation. ZDHHC3/GODZ specifically palmitoylates Cys-603, which leads to Golgi retention and decreased cell surface expression. In contrast, Cys-829 palmitoylation does not affect cell surface expression but regulates stimulation-dependent endocytosis. In terms of processing, phosphorylated at Ser-645. Phosphorylated at Ser-710 by PKC. Phosphorylated at Ser-849 by PKC, PKA and CAMK2. Phosphorylated at Ser-863 by PKC, PKA and PRKG2. Phosphorylation of Ser-863 is reduced by induction of long-term depression and increased by induction of long-term potentiation. In terms of tissue distribution, widely expressed in brain.

It is found in the cell membrane. The protein localises to the endoplasmic reticulum membrane. It localises to the postsynaptic cell membrane. The protein resides in the postsynaptic density membrane. Its subcellular location is the cell projection. It is found in the dendrite. The protein localises to the dendritic spine. It localises to the early endosome membrane. The protein resides in the recycling endosome membrane. Its subcellular location is the presynapse. It is found in the synapse. It carries out the reaction Ca(2+)(in) = Ca(2+)(out). The enzyme catalyses Na(+)(in) = Na(+)(out). It catalyses the reaction Mg(2+)(in) = Mg(2+)(out). The catalysed reaction is Li(+)(in) = Li(+)(out). It carries out the reaction K(+)(in) = K(+)(out). The enzyme catalyses Sr(2+)(in) = Sr(2+)(out). Ionotropic glutamate receptor that functions as a ligand-gated cation channel, gated by L-glutamate and glutamatergic agonists such as alpha-amino-3-hydroxy-5-methyl-4-isoxazolepropionic acid (AMPA), quisqualic acid, and kainic acid. L-glutamate acts as an excitatory neurotransmitter at many synapses in the central nervous system. Binding of the excitatory neurotransmitter L-glutamate induces a conformation change, leading to the opening of the cation channel, and thereby converts the chemical signal to an electrical impulse upon entry of monovalent and divalent cations such as sodium and calcium. The receptor then desensitizes rapidly and enters in a transient inactive state, characterized by the presence of bound agonist. In the presence of CACNG2 or CACNG4 or CACNG7 or CACNG8, shows resensitization which is characterized by a delayed accumulation of current flux upon continued application of L-glutamate. Resensitization is blocked by CNIH2 through interaction with CACNG8 in the CACNG8-containing AMPA receptors complex. Calcium (Ca(2+)) permeability depends on subunits composition and, heteromeric channels containing edited GRIA2 subunit are calcium-impermeable. Also permeable to other divalents cations such as strontium(2+) and magnesium(2+) and monovalent cations such as potassium(1+) and lithium(1+). The polypeptide is Glutamate receptor 1 (Homo sapiens (Human)).